A 337-amino-acid polypeptide reads, in one-letter code: Heme A synthase (337 aa).

5 consecutive transmembrane segments (helical) span residues Ile6–Ile26, Phe87–Phe107, Leu119–Val139, Leu154–Lys174, and Leu192–Val212. Position 256 (His256) interacts with heme. Helical transmembrane passes span Leu258–Glu278, Ile285–Leu305, and Val308–Ile328. His316 provides a ligand contact to heme.

Belongs to the COX15/CtaA family. Type 2 subfamily. Interacts with CtaB. Requires heme b as cofactor.

It is found in the cell membrane. It carries out the reaction Fe(II)-heme o + 2 A + H2O = Fe(II)-heme a + 2 AH2. The protein operates within porphyrin-containing compound metabolism; heme A biosynthesis; heme A from heme O: step 1/1. Catalyzes the conversion of heme O to heme A by two successive hydroxylations of the methyl group at C8. The first hydroxylation forms heme I, the second hydroxylation results in an unstable dihydroxymethyl group, which spontaneously dehydrates, resulting in the formyl group of heme A. This Rickettsia akari (strain Hartford) protein is Heme A synthase.